A 525-amino-acid chain; its full sequence is Cytochrome P450 750A1 (525 aa).

A helical transmembrane segment spans residues 13-33; it reads PLPLPAILIATFIFFFSCWIL. Residue cysteine 465 coordinates heme.

Belongs to the cytochrome P450 family. Heme is required as a cofactor.

Its subcellular location is the membrane. The polypeptide is Cytochrome P450 750A1 (CYP750A1) (Pinus taeda (Loblolly pine)).